A 305-amino-acid chain; its full sequence is Oxygen-dependent coproporphyrinogen-III oxidase (305 aa).

S98 is a substrate binding site. 2 residues coordinate a divalent metal cation: H102 and H112. The active-site Proton donor is the H112. Residue 114–116 (NVR) participates in substrate binding. The a divalent metal cation site is built by H151 and H181. Positions 246–281 (YVEFNLVYDRGTLFGLQSGGRTESILMSMPPLARWE) are important for dimerization. 264-266 (GGR) is a substrate binding site.

This sequence belongs to the aerobic coproporphyrinogen-III oxidase family. Homodimer. A divalent metal cation is required as a cofactor.

It is found in the cytoplasm. It catalyses the reaction coproporphyrinogen III + O2 + 2 H(+) = protoporphyrinogen IX + 2 CO2 + 2 H2O. The protein operates within porphyrin-containing compound metabolism; protoporphyrin-IX biosynthesis; protoporphyrinogen-IX from coproporphyrinogen-III (O2 route): step 1/1. Its function is as follows. Involved in the heme biosynthesis. Catalyzes the aerobic oxidative decarboxylation of propionate groups of rings A and B of coproporphyrinogen-III to yield the vinyl groups in protoporphyrinogen-IX. The sequence is that of Oxygen-dependent coproporphyrinogen-III oxidase from Vibrio vulnificus (strain YJ016).